We begin with the raw amino-acid sequence, 283 residues long: Undecaprenyl-diphosphatase (283 aa).

The next 7 helical transmembrane spans lie at 46–66 (PGVSVTAAIQLGSVAAVIAYF), 95–115 (VAMVIGTLPILVLGLGIKFFW), 127–147 (VPSIAIVSIVMALFLAMAECM), 154–174 (LGGVTGRDGFVVGLAQALAVI), 200–220 (FSFLLGIPAISIAGLVELKSA), 227–247 (AGPLPLLVGIFSAAVVSWLAI), and 259–279 (TWIFVGYRLVFGAGLLVWWAF).

The protein belongs to the UppP family.

It localises to the cell inner membrane. The enzyme catalyses di-trans,octa-cis-undecaprenyl diphosphate + H2O = di-trans,octa-cis-undecaprenyl phosphate + phosphate + H(+). In terms of biological role, catalyzes the dephosphorylation of undecaprenyl diphosphate (UPP). Confers resistance to bacitracin. The polypeptide is Undecaprenyl-diphosphatase (Synechococcus sp. (strain CC9902)).